The chain runs to 224 residues: Dimethyl sulfoxide reductase transcriptional activator (224 aa).

The HTH bat-type domain maps to L158–A209.

Involved in activating dmsEABCD gene expression related to dimethyl sulfoxide (DMSO) reductase. Required for anaerobic respiration on dimethyl sulfoxide (DMSO) and trimethylamine N-oxide (TMAO). This chain is Dimethyl sulfoxide reductase transcriptional activator (dmsR), found in Halobacterium salinarum (strain ATCC 700922 / JCM 11081 / NRC-1) (Halobacterium halobium).